The sequence spans 676 residues: Ribosome quality control complex subunit TCF25 (676 aa).

Disordered regions lie at residues 1 to 59 (MSRR…VRVN) and 85 to 147 (LTDA…ENGL). Basic residues predominate over residues 123–136 (GKLRKKKKKQKNKK). Position 602 is a phosphoserine (S602).

Belongs to the TCF25 family. As to quaternary structure, component of the ribosome quality control complex (RQC), composed of the E3 ubiquitin ligase LTN1, TCF25 and NEMF associated with the 60S ribosomal subunit. Interacts (via C-terminus) with NFATC4; the interaction leads to suppresson of NFATC4 transcription factor activity and is reduced following stimulation with angiotensin-2. Interacts with XIAP. In the embryo, widely expressed with highest levels in brain. In the adult, highest expression is found in the heart. Repressed in cardiac tissue of patients with heart failure (at protein level). mRNA levels in the heart are unchanged in patients with heart failure.

Its subcellular location is the nucleus. It localises to the cytoplasm. The protein resides in the cytosol. Its function is as follows. Component of the ribosome quality control complex (RQC), a ribosome-associated complex that mediates ubiquitination and extraction of incompletely synthesized nascent chains for proteasomal degradation. In the RQC complex, required to promote formation of 'Lys-48'-linked polyubiquitin chains during ubiquitination of incompletely synthesized proteins by LTN1. May negatively regulate the calcineurin-NFAT signaling cascade by suppressing the activity of transcription factor NFATC4. May play a role in cell death control. The sequence is that of Ribosome quality control complex subunit TCF25 from Homo sapiens (Human).